Here is a 224-residue protein sequence, read N- to C-terminus: MNKLMSWVSVLIILPEAFAQTDLRGKVFVFPRESSTDHVTLITKLEKPLKNLTLCLRAYSDLSRGYSLFSYNIHSKDNELLVFKNGIGEYSLYIGKTKVTVRATEKFPSPVHICTSWESSTGIAEFWINGKPLVKRGLKQGYAVGAHPKIVLGQEQDSYGGGFDKNQSFMGEIGDLYMWDSVLSPEEILLVYQGSSSISPTILDWQALKYEIKGYVIVKPMVWG.

An N-terminal signal peptide occupies residues 1 to 19; sequence MNKLMSWVSVLIILPEAFA. Residues 24–224 form the Pentraxin (PTX) domain; that stretch reads RGKVFVFPRE…YVIVKPMVWG (201 aa). Residue Asn-51 is glycosylated (N-linked (GlcNAc...) asparagine). A disulfide bridge links Cys-55 with Cys-114. The Ca(2+) site is built by Asp-77, Asn-78, Glu-155, Gln-156, and Asp-157. Asn-166 carries an N-linked (GlcNAc...) asparagine glycan. A Ca(2+)-binding site is contributed by Gln-167.

This sequence belongs to the pentraxin family. Homopentamer. Pentraxin (or pentaxin) have a discoid arrangement of 5 non-covalently bound subunits. Ca(2+) serves as cofactor.

It localises to the secreted. The protein is Serum amyloid P-component (APCS) of Bos taurus (Bovine).